Here is an 80-residue protein sequence, read N- to C-terminus: MARRLILGYQSYLSPLKMGPTCRFEPTCSNYALIAISRHGLIKGSVLALGRLARCGPWHPGGWDPVPPRRPLCSWGGRRR.

Belongs to the UPF0161 family.

Its subcellular location is the cell membrane. Could be involved in insertion of integral membrane proteins into the membrane. The chain is Putative membrane protein insertion efficiency factor from Corynebacterium jeikeium (strain K411).